Reading from the N-terminus, the 631-residue chain is MPQAKNAPAASFDSLQTELDQKFAYPASSKTYIAGSRPDLRVPMRTIKQTATRTDQGEMLNPPIPVYDTSGPYSDPDVHIDLKAGLAPLRAKWIDERGDTVVLPSLSSEYGQARAHDPATAHLRFAQLTNPRRAKPGANVSQMHYARRGIITPEMEYVALRESLNLQALQDKPEYRKLLKQHPGFSYGANLPQRPEDITPEFVRQEIAAGRAIIPANINHVELEPMAIGRNFRVKINGNLGNSAVTSSLAEEVEKMVWSIRWGADTIMDLSTGKHIHETREWILRNSPVPIGTVPIYQALDKTGGVAEDLTWEMFRDTLIEQAEQGVDYFTIHAGVLLRYVPLTADRITGIVSRGGSIMAKWCLAHHKENFLYTHFDEICEIMKAYDVSFSLGDGLRPGCIADSNDAAQFGELYTLGELTKKAWEHDVQVMIEGPGHVPLQRVQANMDEELKHCFEAPFYTLGPLVTDIAPGYDHITSGIGAANIGWYGTAMLCYVTPKEHLGLPDKEDVREGIITYKIAAHAADLAKGWPGAQLRDNALSKARFEFRWEDQFNLGLDPEKARAFHDETLPAEGAKIAHFCSMCGPKFCSMKITQEVRDYAASLDANATAAEHGMEEKSIEFRKAGAKIYS.

Residues Asn239, Met268, Tyr297, His333, 353–355 (SRG), 394–397 (DGLR), and Glu433 each bind substrate. Position 437 (His437) interacts with Zn(2+). Tyr460 contributes to the substrate binding site. Residue His501 coordinates Zn(2+). Residues Cys581, Cys584, and Cys589 each contribute to the [4Fe-4S] cluster site.

Belongs to the ThiC family. As to quaternary structure, homodimer. The cofactor is [4Fe-4S] cluster.

It carries out the reaction 5-amino-1-(5-phospho-beta-D-ribosyl)imidazole + S-adenosyl-L-methionine = 4-amino-2-methyl-5-(phosphooxymethyl)pyrimidine + CO + 5'-deoxyadenosine + formate + L-methionine + 3 H(+). It functions in the pathway cofactor biosynthesis; thiamine diphosphate biosynthesis. Functionally, catalyzes the synthesis of the hydroxymethylpyrimidine phosphate (HMP-P) moiety of thiamine from aminoimidazole ribotide (AIR) in a radical S-adenosyl-L-methionine (SAM)-dependent reaction. The sequence is that of Phosphomethylpyrimidine synthase from Ralstonia nicotianae (strain ATCC BAA-1114 / GMI1000) (Ralstonia solanacearum).